The primary structure comprises 377 residues: Succinyl-diaminopimelate desuccinylase (377 aa).

Histidine 66 lines the Zn(2+) pocket. Aspartate 68 is a catalytic residue. Aspartate 99 contacts Zn(2+). The active-site Proton acceptor is glutamate 133. Glutamate 134, glutamate 162, and histidine 348 together coordinate Zn(2+).

This sequence belongs to the peptidase M20A family. DapE subfamily. Homodimer. Zn(2+) serves as cofactor. The cofactor is Co(2+).

It catalyses the reaction N-succinyl-(2S,6S)-2,6-diaminopimelate + H2O = (2S,6S)-2,6-diaminopimelate + succinate. It participates in amino-acid biosynthesis; L-lysine biosynthesis via DAP pathway; LL-2,6-diaminopimelate from (S)-tetrahydrodipicolinate (succinylase route): step 3/3. In terms of biological role, catalyzes the hydrolysis of N-succinyl-L,L-diaminopimelic acid (SDAP), forming succinate and LL-2,6-diaminopimelate (DAP), an intermediate involved in the bacterial biosynthesis of lysine and meso-diaminopimelic acid, an essential component of bacterial cell walls. This is Succinyl-diaminopimelate desuccinylase from Xylella fastidiosa (strain M12).